Consider the following 214-residue polypeptide: Holliday junction branch migration complex subunit RuvA (214 aa).

A domain I region spans residues 1-63 (MIASLSGTVE…EDALTLYGFA (63 aa)). The domain II stretch occupies residues 64–142 (DRDEREVFEV…PTGEPVPGAE (79 aa)). Residues 143-151 (AEASDEPAV) are flexible linker. Residues 151–214 (VETVWHADVV…GMAGAVRGGR (64 aa)) are domain III.

This sequence belongs to the RuvA family. Homotetramer. Forms an RuvA(8)-RuvB(12)-Holliday junction (HJ) complex. HJ DNA is sandwiched between 2 RuvA tetramers; dsDNA enters through RuvA and exits via RuvB. An RuvB hexamer assembles on each DNA strand where it exits the tetramer. Each RuvB hexamer is contacted by two RuvA subunits (via domain III) on 2 adjacent RuvB subunits; this complex drives branch migration. In the full resolvosome a probable DNA-RuvA(4)-RuvB(12)-RuvC(2) complex forms which resolves the HJ.

It localises to the cytoplasm. In terms of biological role, the RuvA-RuvB-RuvC complex processes Holliday junction (HJ) DNA during genetic recombination and DNA repair, while the RuvA-RuvB complex plays an important role in the rescue of blocked DNA replication forks via replication fork reversal (RFR). RuvA specifically binds to HJ cruciform DNA, conferring on it an open structure. The RuvB hexamer acts as an ATP-dependent pump, pulling dsDNA into and through the RuvAB complex. HJ branch migration allows RuvC to scan DNA until it finds its consensus sequence, where it cleaves and resolves the cruciform DNA. This Micrococcus luteus (strain ATCC 4698 / DSM 20030 / JCM 1464 / CCM 169 / CCUG 5858 / IAM 1056 / NBRC 3333 / NCIMB 9278 / NCTC 2665 / VKM Ac-2230) (Micrococcus lysodeikticus) protein is Holliday junction branch migration complex subunit RuvA.